Here is a 179-residue protein sequence, read N- to C-terminus: Large ribosomal subunit protein uL5 (179 aa).

It belongs to the universal ribosomal protein uL5 family. In terms of assembly, part of the 50S ribosomal subunit; part of the 5S rRNA/L5/L18/L25 subcomplex. Contacts the 5S rRNA and the P site tRNA. Forms a bridge to the 30S subunit in the 70S ribosome.

Functionally, this is one of the proteins that bind and probably mediate the attachment of the 5S RNA into the large ribosomal subunit, where it forms part of the central protuberance. In the 70S ribosome it contacts protein S13 of the 30S subunit (bridge B1b), connecting the 2 subunits; this bridge is implicated in subunit movement. Contacts the P site tRNA; the 5S rRNA and some of its associated proteins might help stabilize positioning of ribosome-bound tRNAs. The polypeptide is Large ribosomal subunit protein uL5 (Yersinia enterocolitica serotype O:8 / biotype 1B (strain NCTC 13174 / 8081)).